Reading from the N-terminus, the 291-residue chain is Flap endonuclease (291 aa).

The tract at residues 82–116 (YKGNRDEKYAQRTEEEKALDEQFFEYLKDAFELCK) is helical arch. Lys-83 contributes to the DNA binding site. Mg(2+)-binding residues include Asp-130, Asp-153, Asp-155, and Asp-201. The tract at residues 188–224 (DVEQFISLKAIMGDLGDNIRGVEGIGAKRGYNIIREF) is DNA-binding; H3TH. Residues 190–263 (EQFISLKAIM…FRNLILVDLP (74 aa)) form the 5'-3' exonuclease domain. K(+) is bound by residues Val-209 and Ile-212.

Mg(2+) is required as a cofactor. Requires K(+) as cofactor.

It catalyses the reaction Exonucleolytic cleavage in the 5'- to 3'-direction to yield nucleoside 5'-phosphates.. With respect to regulation, inhibited by p-hydroxymercuribenzoate (PHMB). Catalyzes both the 5'-exonucleolytic and structure-specific endonucleolytic hydrolysis of DNA branched nucleic acid molecules and probably plays a role in viral genome replication. Active on flap (branched duplex DNA containing a free single-stranded 5'-end), 5'overhangs and pseudo-Y structures. The substrates require a free, single-stranded 5' end, with endonucleolytic hydrolysis occurring at the junction of double- and single-stranded DNA. This function may be used for example to trim such branched molecules generated by Okazaki fragments synthesis during replication. The polypeptide is Flap endonuclease (D15) (Escherichia phage T5 (Enterobacteria phage T5)).